A 508-amino-acid polypeptide reads, in one-letter code: Light-independent protochlorophyllide reductase subunit B (508 aa).

D36 serves as a coordination point for [4Fe-4S] cluster. D294 (proton donor) is an active-site residue. Residue 429-430 (GM) participates in substrate binding.

The protein belongs to the ChlB/BchB/BchZ family. Protochlorophyllide reductase is composed of three subunits; ChlL, ChlN and ChlB. Forms a heterotetramer of two ChlB and two ChlN subunits. It depends on [4Fe-4S] cluster as a cofactor.

The catalysed reaction is chlorophyllide a + oxidized 2[4Fe-4S]-[ferredoxin] + 2 ADP + 2 phosphate = protochlorophyllide a + reduced 2[4Fe-4S]-[ferredoxin] + 2 ATP + 2 H2O. The protein operates within porphyrin-containing compound metabolism; chlorophyll biosynthesis (light-independent). Its function is as follows. Component of the dark-operative protochlorophyllide reductase (DPOR) that uses Mg-ATP and reduced ferredoxin to reduce ring D of protochlorophyllide (Pchlide) to form chlorophyllide a (Chlide). This reaction is light-independent. The NB-protein (ChlN-ChlB) is the catalytic component of the complex. The polypeptide is Light-independent protochlorophyllide reductase subunit B (Nostoc sp. (strain PCC 7120 / SAG 25.82 / UTEX 2576)).